The primary structure comprises 202 residues: Translation initiation factor 2 subunit beta (202 aa).

Residues 145 to 202 (AIEEGGTYELRIDAVGSKGDGIAKIDKYTVFVPGATKGDVVKVKIKKISGNLAFSERA) enclose the TRAM domain.

The protein belongs to the eIF-2-beta/eIF-5 family. As to quaternary structure, heterotrimer composed of an alpha, a beta and a gamma chain.

Its function is as follows. eIF-2 functions in the early steps of protein synthesis by forming a ternary complex with GTP and initiator tRNA. The sequence is that of Translation initiation factor 2 subunit beta (eif2b) from Methanosarcina mazei (strain ATCC BAA-159 / DSM 3647 / Goe1 / Go1 / JCM 11833 / OCM 88) (Methanosarcina frisia).